A 336-amino-acid chain; its full sequence is Tyrosine phosphatase-like protein H1 (336 aa).

The Tyrosine-protein phosphatase domain occupies 27–295 (IKKEHHKLMK…EICYRVLCEA (269 aa)).

This sequence belongs to the protein-tyrosine phosphatase family.

In Microplitis demolitor (Parasitoid wasp), this protein is Tyrosine phosphatase-like protein H1 (H1).